A 110-amino-acid chain; its full sequence is Large ribosomal subunit protein uL22 (110 aa).

This sequence belongs to the universal ribosomal protein uL22 family. In terms of assembly, part of the 50S ribosomal subunit.

In terms of biological role, this protein binds specifically to 23S rRNA; its binding is stimulated by other ribosomal proteins, e.g. L4, L17, and L20. It is important during the early stages of 50S assembly. It makes multiple contacts with different domains of the 23S rRNA in the assembled 50S subunit and ribosome. Functionally, the globular domain of the protein is located near the polypeptide exit tunnel on the outside of the subunit, while an extended beta-hairpin is found that lines the wall of the exit tunnel in the center of the 70S ribosome. This Shewanella frigidimarina (strain NCIMB 400) protein is Large ribosomal subunit protein uL22.